The primary structure comprises 380 residues: 1-deoxy-D-xylulose 5-phosphate reductoisomerase 2 (380 aa).

Positions 10, 11, 12, 13, 36, 37, 38, and 120 each coordinate NADPH. 1-deoxy-D-xylulose 5-phosphate is bound at residue K121. E122 serves as a coordination point for NADPH. D146 is a Mn(2+) binding site. Positions 147, 148, 172, and 195 each coordinate 1-deoxy-D-xylulose 5-phosphate. Residue E148 coordinates Mn(2+). An NADPH-binding site is contributed by G201. The 1-deoxy-D-xylulose 5-phosphate site is built by S208, N213, K214, and E217. E217 lines the Mn(2+) pocket.

The protein belongs to the DXR family. Requires Mg(2+) as cofactor. Mn(2+) is required as a cofactor.

It catalyses the reaction 2-C-methyl-D-erythritol 4-phosphate + NADP(+) = 1-deoxy-D-xylulose 5-phosphate + NADPH + H(+). It functions in the pathway isoprenoid biosynthesis; isopentenyl diphosphate biosynthesis via DXP pathway; isopentenyl diphosphate from 1-deoxy-D-xylulose 5-phosphate: step 1/6. Functionally, catalyzes the NADPH-dependent rearrangement and reduction of 1-deoxy-D-xylulose-5-phosphate (DXP) to 2-C-methyl-D-erythritol 4-phosphate (MEP). This is 1-deoxy-D-xylulose 5-phosphate reductoisomerase 2 from Bacillus thuringiensis subsp. konkukian (strain 97-27).